Reading from the N-terminus, the 250-residue chain is Flavin-dependent thymidylate synthase (250 aa).

The 227-residue stretch at Leu7 to Thr233 folds into the ThyX domain. Residues Ser71, Arg95 to Arg97, and Gln103 each bind FAD. Residues Glu92–Arg95, Gln103–Arg107, and Arg172 contribute to the dUMP site. The ThyX motif signature appears at Arg95 to Ser105. Residues Asn188 to Arg190 and His194 each bind FAD. Residue Arg199 coordinates dUMP. Catalysis depends on Arg199, which acts as the Involved in ionization of N3 of dUMP, leading to its activation.

The protein belongs to the thymidylate synthase ThyX family. Homotetramer. FAD is required as a cofactor.

It carries out the reaction dUMP + (6R)-5,10-methylene-5,6,7,8-tetrahydrofolate + NADPH + H(+) = dTMP + (6S)-5,6,7,8-tetrahydrofolate + NADP(+). It participates in pyrimidine metabolism; dTTP biosynthesis. Functionally, catalyzes the reductive methylation of 2'-deoxyuridine-5'-monophosphate (dUMP) to 2'-deoxythymidine-5'-monophosphate (dTMP) while utilizing 5,10-methylenetetrahydrofolate (mTHF) as the methyl donor, and NADPH and FADH(2) as the reductant. The protein is Flavin-dependent thymidylate synthase of Mycolicibacterium gilvum (strain PYR-GCK) (Mycobacterium gilvum (strain PYR-GCK)).